A 776-amino-acid chain; its full sequence is Ribosomal biogenesis protein LAS1L (776 aa).

Residues 185–227 (DEDQLDAEDPEEEEREIIADDVLEEIPEPQDDDKDEELAVEDD) are compositionally biased toward acidic residues. Positions 185–247 (DEDQLDAEDP…SHPEPSSRHK (63 aa)) are disordered. Residues 228–247 (ANTKGNEEVASHPEPSSRHK) show a composition bias toward basic and acidic residues. S425 and S509 each carry phosphoserine. The disordered stretch occupies residues 501-646 (KAIEGSSSSS…DYDDDEEEDR (146 aa)). Residues 544 to 557 (GNLKDVKQEEKKEN) show a composition bias toward basic and acidic residues. 2 stretches are compositionally biased toward acidic residues: residues 558 to 602 (EEEE…EEEE) and 611 to 646 (MEAD…EEDR). Position 658 is a phosphoserine (S658). The interval 677–696 (SAWQVSSEDVRWGTFPLGRL) is interaction with NOL9. Residues 733 to 759 (SSTLSLCCGGSNTNSSSSSSSGNMEGL) are disordered. Residues 741 to 755 (GGSNTNSSSSSSSGN) are compositionally biased toward low complexity.

This sequence belongs to the LAS1 family. As to quaternary structure, component of some MLL1/MLL complex, at least composed of the core components KMT2A/MLL1, ASH2L, HCFC1/HCF1, WDR5 and RBBP5, as well as the facultative components BACC1, CHD8, E2F6, HSP70, INO80C, KANSL1, LAS1L, MAX, MCRS1, MGA, MYST1/MOF, PELP1, PHF20, PRP31, RING2, RUVB1/TIP49A, RUVB2/TIP49B, SENP3, TAF1, TAF4, TAF6, TAF7, TAF9 and TEX10. Component of the 5FMC complex, at least composed of PELP1, LAS1L, TEX10, WDR18 and SENP3; the complex interacts with methylated CHTOP and ZNF148. Interacts with NOL9 to form an ITS2 pre-rRNA endonuclease-kinase complex.

It is found in the nucleus. The protein localises to the nucleolus. Its subcellular location is the nucleoplasm. The protein resides in the cytoplasm. Required for the synthesis of the 60S ribosomal subunit and maturation of the 28S rRNA. Functions as a component of the Five Friends of Methylated CHTOP (5FMC) complex; the 5FMC complex is recruited to ZNF148 by methylated CHTOP, leading to desumoylation of ZNF148 and subsequent transactivation of ZNF148 target genes. Required for the efficient pre-rRNA processing at both ends of internal transcribed spacer 2 (ITS2). This is Ribosomal biogenesis protein LAS1L (Las1l) from Mus musculus (Mouse).